Consider the following 1567-residue polypeptide: Myosin-2A (1567 aa).

The Myosin N-terminal SH3-like domain maps to 4–57; the sequence is EVGTRCWYPSKEQGWIGAEVTKNDLKDGTYFMELTLEDNEVVNVETKDLTNEKD. Residues 70–786 form the Myosin motor domain; the sequence is ESTEDLTTLS…MLAYFEKLRS (717 aa). 164-171 contacts ATP; the sequence is GESGAGKT. An actin-binding region spans residues 446–526; it reads FIGVLDIYGF…LGILSLLDEE (81 aa). Positions 619–640 are disordered; the sequence is EEAKKNAASQDQKQLKKPTPIR. IQ domains follow at residues 789-818, 812-836, 837-859, 860-884, 885-907, and 908-937; these read MNSAIVLIQKHIRSKYYRKQYMLMKASLSL, MKASLSLLGAYSKGTVIRQRVEYEL, EQHAATLIQTMYRGYSKRSYISG, VISSIVKLQSRIREELEQREMQSKY, ESNAAISIQSRIRAFVPRKAYES, and KRRDTIVVQSLIRRRIAQRDFKKLKADAKS. The stretch at 947–1091 forms a coiled coil; it reads KLENKVIQLT…LAHLQTSIAL (145 aa). The interval 1092–1567 is non alpha-helical, tail domain; it reads GTVTTNTNIV…VAQQVTVPDA (476 aa). One can recognise a Dilute domain in the interval 1230–1505; sequence AQVLTTIQKV…LKYVADIVKK (276 aa).

This sequence belongs to the TRAFAC class myosin-kinesin ATPase superfamily. Myosin family. Homodimer. Interacts with calmodulin (CMD1) and the myosin light chain MLC1 through its IQ repeats.

Its function is as follows. Myosin heavy chain that is required for the cell cycle-regulated transport of various organelles and proteins for their segregation. Functions by binding with its tail domain to receptor proteins on organelles and exerting force with its N-terminal motor domain against actin filaments, thereby transporting its cargo along polarized actin cables. This Naumovozyma castellii (Yeast) protein is Myosin-2A (MYO2A).